The following is a 129-amino-acid chain: Lysozyme C (129 aa).

The C-type lysozyme domain occupies 1 to 129 (KVYGRCELAA…VSVWTRGCRL (129 aa)). Intrachain disulfides connect Cys6-Cys127, Cys30-Cys115, Cys64-Cys80, and Cys76-Cys94. Active-site residues include Glu35 and Asp52.

It belongs to the glycosyl hydrolase 22 family. As to quaternary structure, monomer.

The protein localises to the secreted. It catalyses the reaction Hydrolysis of (1-&gt;4)-beta-linkages between N-acetylmuramic acid and N-acetyl-D-glucosamine residues in a peptidoglycan and between N-acetyl-D-glucosamine residues in chitodextrins.. Lysozymes have primarily a bacteriolytic function; those in tissues and body fluids are associated with the monocyte-macrophage system and enhance the activity of immunoagents. This is Lysozyme C (LYZ) from Lophura leucomelanos (Kalij pheasant).